A 230-amino-acid chain; its full sequence is Dickkopf-like protein 1 (230 aa).

An N-terminal signal peptide occupies residues 1–20 (MCRLRVLLLLLPLAFVSSSA). N-linked (GlcNAc...) asparagine glycosylation is found at N31, N87, and N102.

Interacts with SLXL1; Co-localize in seminiferous tubules. Interacts with SLY. N-glycosylated during spermatogenesis. Not N-glycosylated in mature sperm. In terms of tissue distribution, testis-specific. Abundant in the seminiferous tubules where it is associated with developing spermatocytes. Expressed only in testis (at protein level). Not detectable on postnatal days 4 and 9 but after day 18 it gradually increased as the development of testes progressed. Expressed at high levels in testis and at weak levels in epididymis.

The protein localises to the secreted. It is found in the cytoplasmic vesicle. Its subcellular location is the secretory vesicle. It localises to the acrosome. Its function is as follows. Involved in fertilization by facilitating sperm penetration of the zona pellucida. May promote spermatocyte apoptosis, thereby limiting sperm production. In adults, may reduce testosterone synthesis in Leydig cells. Is not essential either for development or fertility. The chain is Dickkopf-like protein 1 from Mus musculus (Mouse).